The sequence spans 278 residues: Sulfur carrier protein FdhD (278 aa).

Cys-121 functions as the Cysteine persulfide intermediate in the catalytic mechanism. Phe-260–Arg-265 is a Mo-bis(molybdopterin guanine dinucleotide) binding site.

It belongs to the FdhD family.

The protein resides in the cytoplasm. In terms of biological role, required for formate dehydrogenase (FDH) activity. Acts as a sulfur carrier protein that transfers sulfur from IscS to the molybdenum cofactor prior to its insertion into FDH. In Escherichia coli O127:H6 (strain E2348/69 / EPEC), this protein is Sulfur carrier protein FdhD.